The primary structure comprises 272 residues: Probable glutathione S-transferase DHAR2, chloroplastic (272 aa).

The N-terminal 57 residues, 1 to 57 (MAVLLRTTTSATTATSGGSSSATALLATTFRRGGRRLLLLPATRGSAPRRAALLTAR), are a transit peptide targeting the chloroplast. 2 residues coordinate glutathione: Lys68 and Asp79. 2 residues coordinate L-ascorbate: Lys68 and Asp79. One can recognise a GST N-terminal domain in the interval 70–148 (SLTVPDRLGD…AIEEKYPEPS (79 aa)). Cys80 functions as the Nucleophile in the catalytic mechanism. Glutathione contacts are provided by Lys107, Val120, Ser133, His219, and Trp266. In terms of domain architecture, GST C-terminal spans 126–272 (EEQWVADSDV…IAGWRPKVMG (147 aa)). Lys269 is a binding site for L-ascorbate.

This sequence belongs to the GST superfamily. DHAR family. As to quaternary structure, monomer.

The protein resides in the plastid. Its subcellular location is the chloroplast. It carries out the reaction RX + glutathione = an S-substituted glutathione + a halide anion + H(+). The enzyme catalyses L-dehydroascorbate + 2 glutathione = glutathione disulfide + L-ascorbate. Its function is as follows. Involved in ascorbate homeostasis. Maintains redox pools of ascorbate by recycling dihydroascorbate (DHA) to ascorbate. Involved in scavenging reactive oxygen species (ROS) under oxidative stresses. This chain is Probable glutathione S-transferase DHAR2, chloroplastic, found in Oryza sativa subsp. japonica (Rice).